The following is a 424-amino-acid chain: CAAX prenyl protease 1 homolog (424 aa).

5 helical membrane-spanning segments follow: residues 3–23 (IPFM…ETYL), 67–87 (EFVT…PWFW), 109–129 (LSFL…FSLY), 155–175 (GTFL…FIVQ), and 185–205 (LWAF…VLIA). H284 contacts Zn(2+). E285 is a catalytic residue. Position 288 (H288) interacts with Zn(2+). The next 2 membrane-spanning stretches (helical) occupy residues 295-315 (TYSF…YTLV) and 332-352 (VLIG…LVSF). E362 provides a ligand contact to Zn(2+). The active-site Proton donor is the D366.

The protein belongs to the peptidase M48A family. The cofactor is Zn(2+). As to expression, expressed in leaves, stems and flowers.

The protein resides in the endoplasmic reticulum membrane. The catalysed reaction is Hydrolyzes the peptide bond -P2-(S-farnesyl or geranylgeranyl)C-P1'-P2'-P3'-COOH where P1' and P2' are amino acids with aliphatic side chains and P3' is any C-terminal residue.. In terms of biological role, proteolytically removes the C-terminal three residues of farnesylated proteins. The substrate specificity is only partially overlapping with that of FACE2. The sequence is that of CAAX prenyl protease 1 homolog (FACE1) from Arabidopsis thaliana (Mouse-ear cress).